The primary structure comprises 515 residues: Bifunctional purine biosynthesis protein PurH (515 aa).

Positions 1–145 constitute an MGS-like domain; sequence MTKRALISVS…KNHASVTVVV (145 aa).

This sequence belongs to the PurH family.

It catalyses the reaction (6R)-10-formyltetrahydrofolate + 5-amino-1-(5-phospho-beta-D-ribosyl)imidazole-4-carboxamide = 5-formamido-1-(5-phospho-D-ribosyl)imidazole-4-carboxamide + (6S)-5,6,7,8-tetrahydrofolate. It carries out the reaction IMP + H2O = 5-formamido-1-(5-phospho-D-ribosyl)imidazole-4-carboxamide. It functions in the pathway purine metabolism; IMP biosynthesis via de novo pathway; 5-formamido-1-(5-phospho-D-ribosyl)imidazole-4-carboxamide from 5-amino-1-(5-phospho-D-ribosyl)imidazole-4-carboxamide (10-formyl THF route): step 1/1. The protein operates within purine metabolism; IMP biosynthesis via de novo pathway; IMP from 5-formamido-1-(5-phospho-D-ribosyl)imidazole-4-carboxamide: step 1/1. This is Bifunctional purine biosynthesis protein PurH from Streptococcus pyogenes serotype M12 (strain MGAS2096).